We begin with the raw amino-acid sequence, 308 residues long: Methionyl-tRNA formyltransferase (308 aa).

109-112 (SLLP) is a binding site for (6S)-5,6,7,8-tetrahydrofolate.

It belongs to the Fmt family.

The enzyme catalyses L-methionyl-tRNA(fMet) + (6R)-10-formyltetrahydrofolate = N-formyl-L-methionyl-tRNA(fMet) + (6S)-5,6,7,8-tetrahydrofolate + H(+). Functionally, attaches a formyl group to the free amino group of methionyl-tRNA(fMet). The formyl group appears to play a dual role in the initiator identity of N-formylmethionyl-tRNA by promoting its recognition by IF2 and preventing the misappropriation of this tRNA by the elongation apparatus. This is Methionyl-tRNA formyltransferase from Salinispora arenicola (strain CNS-205).